The primary structure comprises 153 residues: Large ribosomal subunit protein uL30 (153 aa).

This sequence belongs to the universal ribosomal protein uL30 family. Part of the 50S ribosomal subunit.

The protein is Large ribosomal subunit protein uL30 of Methanosarcina mazei (strain ATCC BAA-159 / DSM 3647 / Goe1 / Go1 / JCM 11833 / OCM 88) (Methanosarcina frisia).